A 102-amino-acid polypeptide reads, in one-letter code: Small ribosomal subunit protein uS10m (102 aa).

Belongs to the universal ribosomal protein uS10 family.

It is found in the mitochondrion. The sequence is that of Small ribosomal subunit protein uS10m (RPS10) from Marchantia polymorpha (Common liverwort).